A 1409-amino-acid chain; its full sequence is Receptor-type tyrosine-protein phosphatase (1409 aa).

The N-terminal stretch at 1–22 (MRINRWIWWATVILLYLRTGLA) is a signal peptide. The Extracellular portion of the chain corresponds to 23–712 (ADFFRSSEEN…LLDTESSSSG (690 aa)). Positions 32-53 (NDRKSSDDLDNFNSTKIEPDKP) are disordered. In terms of domain architecture, Ig-like C2-type spans 159–267 (PTKCDKRDLA…TASASDLDVT (109 aa)). An intrachain disulfide couples cysteine 189 to cysteine 255. Fibronectin type-III domains are found at residues 276–366 (APRQ…TKQK) and 372–502 (KEED…AQPD). A helical membrane pass occupies residues 713 to 733 (FGIFMKIILPFLLFLAFATGV). The Cytoplasmic portion of the chain corresponds to 734–1409 (TMFFVNRKGH…LADYISKTYR (676 aa)). Tyrosine-protein phosphatase domains are found at residues 793–1072 (FAQE…LAEW) and 1135–1403 (LEEE…LADY). Active-site phosphocysteine intermediate residues include cysteine 1013 and cysteine 1344.

It belongs to the protein-tyrosine phosphatase family. Receptor class 2A subfamily. Expressed in muscles, hypodermis and a subset of neurons. Expressed in the AVA neurons, with high expression in the anterior half of the preanal ganglion where AVA neurons contact the PHB neurons.

It localises to the cell membrane. The protein resides in the synapse. The catalysed reaction is O-phospho-L-tyrosyl-[protein] + H2O = L-tyrosyl-[protein] + phosphate. Its function is as follows. Possesses an intrinsic protein tyrosine phosphatase (PTPase) activity. Regulates egl-15 activity which is required for hypodermis-mediated fluid homeostasis and protein degradation in muscle. During the formation of neuromuscular junctions at the larval stage, negatively regulates membrane protrusion from body wall muscles. Plays a role in nicotinic acetylcholine receptor (nAChR)-mediated sensitivity to nicotine. Regulates synaptic levels of nAchR subunit lev-1 in the nerve cord. Promotes the outgrowth of the quaternary dendritic branches of the PVD sensory neurons. In parallel to the sax-7/mnr-1 pathway, also controls the extension of the PVD primary branches. Acts in the netrin/DCC pathway to mediate the formation of synapses between the AVA interneurons and the PHB sensory neurons. Also required for the formation of synapses between the AVA interneurons and the VA10 motor neurons. This chain is Receptor-type tyrosine-protein phosphatase, found in Caenorhabditis elegans.